The following is a 422-amino-acid chain: Tyrosine--tRNA ligase (422 aa).

Tyrosine 35 contacts L-tyrosine. Positions 40 to 49 (PTAPSLHVGH) match the 'HIGH' region motif. Positions 170 and 174 each coordinate L-tyrosine. A 'KMSKS' region motif is present at residues 231-235 (KFGKT). Lysine 234 provides a ligand contact to ATP. An S4 RNA-binding domain is found at 353-419 (APVVDLFAEV…GKKNLAAVEI (67 aa)).

The protein belongs to the class-I aminoacyl-tRNA synthetase family. TyrS type 1 subfamily. As to quaternary structure, homodimer.

It localises to the cytoplasm. The enzyme catalyses tRNA(Tyr) + L-tyrosine + ATP = L-tyrosyl-tRNA(Tyr) + AMP + diphosphate + H(+). Its function is as follows. Catalyzes the attachment of tyrosine to tRNA(Tyr) in a two-step reaction: tyrosine is first activated by ATP to form Tyr-AMP and then transferred to the acceptor end of tRNA(Tyr). In Streptomyces coelicolor (strain ATCC BAA-471 / A3(2) / M145), this protein is Tyrosine--tRNA ligase.